The sequence spans 208 residues: V-type ATP synthase subunit D (208 aa).

The protein belongs to the V-ATPase D subunit family.

Functionally, produces ATP from ADP in the presence of a proton gradient across the membrane. This is V-type ATP synthase subunit D from Chlamydia felis (strain Fe/C-56) (Chlamydophila felis).